The following is a 336-amino-acid chain: Fructose-1,6-bisphosphatase class 1 (336 aa).

Mg(2+) is bound by residues E92, D115, L117, and D118. Substrate-binding positions include 118–121 (DGSS), N211, Y244, 262–264 (YLY), and K274. Residue E280 participates in Mg(2+) binding.

Belongs to the FBPase class 1 family. As to quaternary structure, homotetramer. It depends on Mg(2+) as a cofactor.

Its subcellular location is the cytoplasm. It carries out the reaction beta-D-fructose 1,6-bisphosphate + H2O = beta-D-fructose 6-phosphate + phosphate. It participates in carbohydrate biosynthesis; gluconeogenesis. The sequence is that of Fructose-1,6-bisphosphatase class 1 from Aliivibrio salmonicida (strain LFI1238) (Vibrio salmonicida (strain LFI1238)).